We begin with the raw amino-acid sequence, 1212 residues long: Filamin-A-interacting protein 1 (1212 aa).

Polar residues predominate over residues 1–15 (MRSRNQGGESSSNGH). A disordered region spans residues 1–73 (MRSRNQGGES…SEKKTKKSVE (73 aa)). Composition is skewed to basic and acidic residues over residues 32–47 (PSED…KEED) and 60–73 (PSGE…KSVE). S137 bears the Phosphoserine mark. 2 coiled-coil regions span residues 191–575 (DYMN…DELM) and 623–777 (PEDN…ELEL). 2 disordered regions span residues 871-898 (WMRK…HPGE) and 948-975 (KPRI…GPER). S978 bears the Phosphoserine mark. The segment at 1102-1190 (VSTGTVLRSP…TKFQPRAETQ (89 aa)) is disordered. Over residues 1124–1138 (VTSTITITPVTTSST) the composition is skewed to low complexity. The span at 1139–1155 (RGTQSVSGQDGSSQRPT) shows a compositional bias: polar residues.

Belongs to the FILIP1 family. As to quaternary structure, interacts with FLNA. Interacts with RHOD (in GTP-bound form). Expressed in muscle tissue, including heart. Found in cortical ventricular zone.

Its subcellular location is the cytoplasm. It localises to the cytoskeleton. The protein resides in the stress fiber. Its function is as follows. By acting through a filamin-A/F-actin axis, it controls the start of neocortical cell migration from the ventricular zone. May be able to induce the degradation of Filamin A. This is Filamin-A-interacting protein 1 (Filip1) from Rattus norvegicus (Rat).